The sequence spans 267 residues: tRNA pseudouridine synthase A (267 aa).

D51 (nucleophile) is an active-site residue. Y109 serves as a coordination point for substrate.

The protein belongs to the tRNA pseudouridine synthase TruA family. In terms of assembly, homodimer.

It catalyses the reaction uridine(38/39/40) in tRNA = pseudouridine(38/39/40) in tRNA. In terms of biological role, formation of pseudouridine at positions 38, 39 and 40 in the anticodon stem and loop of transfer RNAs. This Staphylococcus epidermidis (strain ATCC 12228 / FDA PCI 1200) protein is tRNA pseudouridine synthase A.